The chain runs to 2157 residues: Unconventional myosin-IXb (2157 aa).

N-acetylserine is present on Ser-2. In terms of domain architecture, Ras-associating spans 15-114 (AAYHLHIYPQ…YYFLLQERNA (100 aa)). Residues 146–953 (ADFDDLCNLP…ERQALQETLH (808 aa)) enclose the Myosin motor domain. Position 239-246 (239-246 (GESGSGKT)) interacts with ATP. A disordered region spans residues 709–734 (AEKAAGMSSPGAQSHPEELPRGASTP). Ser-716 and Ser-717 each carry phosphoserine. An actin-binding region spans residues 844–855 (KAEPFFIRCIRS). Positions 940–1044 (LKETERQALQ…CRGHLQRKSF (105 aa)) are neck or regulatory domain. IQ domains follow at residues 957-977 (VRKI…RHFL), 979-1000 (MKRA…RALE), 1001-1023 (RTQA…LYRH), and 1024-1053 (QKQS…EKQK). A Phosphoserine modification is found at Ser-1045. A tail region spans residues 1045-2157 (SQMISEKQKA…LPPASGQTNG (1113 aa)). Residues 1046-1071 (QMISEKQKAEEKEREALEAARAGAEE) adopt a coiled-coil conformation. 3 disordered regions span residues 1046–1298 (QMIS…TQIQ), 1320–1410 (AAAS…GSQV), and 1455–1484 (GLEA…KKNR). Composition is skewed to basic and acidic residues over residues 1050-1063 (EKQK…EALE), 1109-1122 (SPLE…EAPS), 1136-1160 (ESHE…EHVK), 1168-1183 (SCKE…RRVT), and 1191-1201 (LEDKKESREDE). A phosphoserine mark is found at Ser-1114, Ser-1115, and Ser-1122. The segment covering 1211-1222 (ENTSQKQPTEQP) has biased composition (polar residues). Ser-1242, Ser-1253, Ser-1261, and Ser-1267 each carry phosphoserine. Thr-1271 carries the phosphothreonine modification. A phosphoserine mark is found at Ser-1290, Ser-1323, and Ser-1331. Phosphothreonine is present on Thr-1346. Residues Ser-1354, Ser-1356, and Ser-1405 each carry the phosphoserine modification. Basic and acidic residues predominate over residues 1467–1478 (AAGEKRTKEPGG). The Phorbol-ester/DAG-type zinc finger occupies 1632–1681 (GHVFASYQVSIPQSCEQCLSYIWLMDKALLCSVCKMTCHKKCVHKIQSHC). A Rho-GAP domain is found at 1703–1888 (DSLTSDKASV…MLIKEQMRKY (186 aa)). Residues 1739–1744 (AANRTR) are interaction with RHOA. Residues 1880–1901 (LIKEQMRKYKVKMEEISQLEAA) adopt a coiled-coil conformation. 4 positions are modified to phosphoserine: Ser-1926, Ser-1972, Ser-1992, and Ser-1999. The stretch at 1959 to 1989 (EDREKEILIERIQSIKEEKEDITYRLPELDP) forms a coiled coil. A compositionally biased stretch (basic and acidic residues) spans 1980–1993 (ITYRLPELDPRGSD). Residues 1980–2157 (ITYRLPELDP…LPPASGQTNG (178 aa)) form a disordered region. Thr-2005 bears the Phosphothreonine mark. A compositionally biased stretch (pro residues) spans 2021-2037 (PPAPALPCPGAPTPSPL). A Phosphoserine modification is found at Ser-2050. Over residues 2081–2093 (PRWAPGAREAAAP) the composition is skewed to low complexity. The span at 2095–2106 (RRREPPARRPDQ) shows a compositional bias: basic and acidic residues. Ser-2141 carries the phosphoserine modification.

Belongs to the TRAFAC class myosin-kinesin ATPase superfamily. Myosin family. In terms of assembly, interacts (via IQ domains) with CALM. Interacts with RHOA. Interacts (via Rho-GAP domain) with ROBO1; this inhibits the interaction with RHOA and the stimulation of RHOA GTPase activity, and thereby increases the levels of active RHOA. In terms of tissue distribution, detected in peripheral blood leukocytes (at protein level). Expressed predominantly in peripheral blood leukocytes and at lower levels, in thymus, spleen, testis, prostate, ovary, brain, small intestine and lung.

The protein localises to the cytoplasm. It is found in the cell cortex. It localises to the perinuclear region. Its subcellular location is the cytoskeleton. Functionally, myosins are actin-based motor molecules with ATPase activity. Unconventional myosins serve in intracellular movements. Binds actin with high affinity both in the absence and presence of ATP and its mechanochemical activity is inhibited by calcium ions. Also acts as a GTPase activator for RHOA. Plays a role in the regulation of cell migration via its role as RHOA GTPase activator. This is regulated by its interaction with the SLIT2 receptor ROBO1; interaction with ROBO1 impairs interaction with RHOA and subsequent activation of RHOA GTPase activity, and thereby leads to increased levels of active, GTP-bound RHOA. The polypeptide is Unconventional myosin-IXb (MYO9B) (Homo sapiens (Human)).